The sequence spans 360 residues: Chorismate synthase (360 aa).

Arginine 48 and arginine 54 together coordinate NADP(+). FMN-binding positions include 125-127 (RSS), 246-247 (NA), glycine 286, 301-305 (KPTSS), and arginine 327.

Belongs to the chorismate synthase family. As to quaternary structure, homotetramer. FMNH2 serves as cofactor.

It carries out the reaction 5-O-(1-carboxyvinyl)-3-phosphoshikimate = chorismate + phosphate. Its pathway is metabolic intermediate biosynthesis; chorismate biosynthesis; chorismate from D-erythrose 4-phosphate and phosphoenolpyruvate: step 7/7. Its function is as follows. Catalyzes the anti-1,4-elimination of the C-3 phosphate and the C-6 proR hydrogen from 5-enolpyruvylshikimate-3-phosphate (EPSP) to yield chorismate, which is the branch point compound that serves as the starting substrate for the three terminal pathways of aromatic amino acid biosynthesis. This reaction introduces a second double bond into the aromatic ring system. The polypeptide is Chorismate synthase (Glaesserella parasuis serovar 5 (strain SH0165) (Haemophilus parasuis)).